Reading from the N-terminus, the 245-residue chain is NADH-quinone oxidoreductase subunit C (245 aa).

Over residues 1 to 10 the composition is skewed to basic and acidic residues; the sequence is MSAPQDRTDD. Disordered regions lie at residues 1 to 54 and 216 to 245; these read MSAP…GYGG and PQRKDYPLGGVPVEYKGAEIPPPDRRRSYQ. Over residues 11-28 the composition is skewed to low complexity; the sequence is GGVPVPVTPAGATGGAPA. Residues 39–54 are compositionally biased toward gly residues; the sequence is GMFGDQGTGDVSGYGG.

Belongs to the complex I 30 kDa subunit family. In terms of assembly, NDH-1 is composed of 14 different subunits. Subunits NuoB, C, D, E, F, and G constitute the peripheral sector of the complex.

The protein localises to the cell membrane. The enzyme catalyses a quinone + NADH + 5 H(+)(in) = a quinol + NAD(+) + 4 H(+)(out). Its function is as follows. NDH-1 shuttles electrons from NADH, via FMN and iron-sulfur (Fe-S) centers, to quinones in the respiratory chain. The immediate electron acceptor for the enzyme in this species is believed to be a menaquinone. Couples the redox reaction to proton translocation (for every two electrons transferred, four hydrogen ions are translocated across the cytoplasmic membrane), and thus conserves the redox energy in a proton gradient. This is NADH-quinone oxidoreductase subunit C from Salinispora tropica (strain ATCC BAA-916 / DSM 44818 / JCM 13857 / NBRC 105044 / CNB-440).